Consider the following 153-residue polypeptide: Histone H2B.3 (153 aa).

Basic and acidic residues-rich tracts occupy residues 1–28 (MAPK…EKAP) and 36–53 (EKRL…EGRK). Residues 1-61 (MAPKAEKKPA…RKAGRKKAKK (61 aa)) are disordered. N6-acetyllysine occurs at positions 7 and 37. A Glycyl lysine isopeptide (Lys-Gly) (interchain with G-Cter in ubiquitin) cross-link involves residue K149.

The protein belongs to the histone H2B family. The nucleosome is a histone octamer containing two molecules each of H2A, H2B, H3 and H4 assembled in one H3-H4 heterotetramer and two H2A-H2B heterodimers. The octamer wraps approximately 147 bp of DNA. Can be acetylated to form H2BK6ac and H2BK33ac. In terms of processing, monoubiquitinated by BRE1 to form H2BK143ub1 and deubiquitinated by UBP26. Required for heterochromatic histone H3 di- and trimethylation at H3K4me. May give a specific tag for epigenetic transcriptional activation.

Its subcellular location is the nucleus. The protein localises to the chromosome. Its function is as follows. Core component of nucleosome. Nucleosomes wrap and compact DNA into chromatin, limiting DNA accessibility to the cellular machineries which require DNA as a template. Histones thereby play a central role in transcription regulation, DNA repair, DNA replication and chromosomal stability. DNA accessibility is regulated via a complex set of post-translational modifications of histones, also called histone code, and nucleosome remodeling. In Oryza sativa subsp. japonica (Rice), this protein is Histone H2B.3 (H2B.3).